The sequence spans 292 residues: Ribosomal protein L11 methyltransferase (292 aa).

Residues Thr144, Gly165, Asp187, and Asn229 each contribute to the S-adenosyl-L-methionine site.

This sequence belongs to the methyltransferase superfamily. PrmA family.

The protein localises to the cytoplasm. It carries out the reaction L-lysyl-[protein] + 3 S-adenosyl-L-methionine = N(6),N(6),N(6)-trimethyl-L-lysyl-[protein] + 3 S-adenosyl-L-homocysteine + 3 H(+). Functionally, methylates ribosomal protein L11. The protein is Ribosomal protein L11 methyltransferase of Pseudomonas syringae pv. tomato (strain ATCC BAA-871 / DC3000).